The primary structure comprises 252 residues: tRNA pseudouridine synthase A (252 aa).

Catalysis depends on D52, which acts as the Nucleophile. Y111 is a substrate binding site.

It belongs to the tRNA pseudouridine synthase TruA family. In terms of assembly, homodimer.

It catalyses the reaction uridine(38/39/40) in tRNA = pseudouridine(38/39/40) in tRNA. Functionally, formation of pseudouridine at positions 38, 39 and 40 in the anticodon stem and loop of transfer RNAs. This is tRNA pseudouridine synthase A from Parabacteroides distasonis (strain ATCC 8503 / DSM 20701 / CIP 104284 / JCM 5825 / NCTC 11152).